A 151-amino-acid chain; its full sequence is MAALHWLLLAALLGCTLAEEQAIFYNCEEASEAVCSVKEVRINPCNPNKKCIFKKGVNASISFDFEPNFASSKLVTTLYGPFDVEFDEMTNVDACQYTKCPTEPGKSQVLDYTLYIGKKLPQGTYTFKWKLWNPEETSQLCCFKTTIKIRK.

The first 18 residues, 1 to 18 (MAALHWLLLAALLGCTLA), serve as a signal peptide directing secretion. Disulfide bonds link C27–C141, C45–C51, and C95–C100. N-linked (GlcNAc...) asparagine glycosylation occurs at N58.

N-glycosylated. In terms of tissue distribution, hemolymph (at protein level). Constitutively expressed mainly in fat body and also in hemocytes and secreted into hemolymph. Not detected in midgut, epidermis, or Malpighian tubule of naive larvae.

The protein resides in the secreted. Functionally, binds to lipopolysaccharide from a variety of Gram-negative bacteria and to lipid A. In Manduca sexta (Tobacco hawkmoth), this protein is MD-2-related lipid-recognition protein.